The sequence spans 98 residues: EKC/KEOPS complex subunit GON7 (98 aa).

M1 is subject to N-acetylmethionine. The segment at D55–S98 is disordered. The span at E61–N79 shows a compositional bias: acidic residues.

In terms of assembly, component of the EKC/KEOPS complex composed of at least GON7, TP53RK, TPRKB, OSGEP and LAGE3; the whole complex dimerizes.

The protein resides in the nucleus. Its function is as follows. Component of the EKC/KEOPS complex that is required for the formation of a threonylcarbamoyl group on adenosine at position 37 (t(6)A37) in tRNAs that read codons beginning with adenine. The complex is probably involved in the transfer of the threonylcarbamoyl moiety of threonylcarbamoyl-AMP (TC-AMP) to the N6 group of A37. GON7 plays a supporting role to the catalytic subunit OSGEP in the complex. This Mus musculus (Mouse) protein is EKC/KEOPS complex subunit GON7.